Reading from the N-terminus, the 440-residue chain is Glycerophosphocholine cholinephosphodiesterase ENPP6 (440 aa).

The first 22 residues, 1–22, serve as a signal peptide directing secretion; it reads MAVKLGTLLLALALGLAQPASA. Substrate-binding residues include aspartate 32, serine 71, and asparagine 92. Residues aspartate 32 and serine 71 each coordinate Zn(2+). Serine 71 serves as the catalytic Nucleophile. Serine 71 is modified (phosphoserine). Asparagine 100 and asparagine 118 each carry an N-linked (GlcNAc...) asparagine glycan. A disulfide bond links cysteine 142 and cysteine 154. Residue aspartate 193 participates in substrate binding. Zn(2+)-binding residues include aspartate 193, histidine 197, aspartate 240, and histidine 241. Position 241 (histidine 241) interacts with substrate. Asparagine 341 is a glycosylation site (N-linked (GlcNAc...) asparagine). Residue histidine 354 coordinates substrate. Residue histidine 354 coordinates Zn(2+). Asparagine 404 carries an N-linked (GlcNAc...) asparagine glycan. Alanine 418 is lipidated: GPI-anchor amidated alanine. The propeptide at 419–440 is removed in mature form; the sequence is GTTPPVQPSHCALALILLFLLA.

Belongs to the nucleotide pyrophosphatase/phosphodiesterase family. As to quaternary structure, homodimer; disulfide-linked. Homotetramer. Zn(2+) serves as cofactor.

Its subcellular location is the cell membrane. It carries out the reaction sn-glycerol 3-phosphocholine + H2O = phosphocholine + glycerol + H(+). The catalysed reaction is a 1-acyl-sn-glycero-3-phosphocholine + H2O = a 1-acyl-sn-glycerol + phosphocholine + H(+). The enzyme catalyses a 1-O-alkyl-sn-glycero-3-phosphocholine + H2O = a 1-O-alkyl-sn-glycerol + phosphocholine + H(+). It catalyses the reaction 1-dodecanoyl-sn-glycero-3-phosphocholine + H2O = 1-dodecanoyl-sn-glycerol + phosphocholine + H(+). It carries out the reaction 1-hexadecanoyl-sn-glycero-3-phosphocholine + H2O = 1-hexadecanoyl-sn-glycerol + phosphocholine + H(+). The catalysed reaction is 1-(5Z,8Z,11Z,14Z-eicosatetraenoyl)-sn-glycero-3-phosphocholine + H2O = 1-(5Z,8Z,11Z,14Z-eicosatetraenoyl)-sn-glycerol + phosphocholine + H(+). The enzyme catalyses 1-tetradecanoyl-sn-glycero-3-phosphocholine + H2O = 1-tetradecanoyl-sn-glycerol + phosphocholine + H(+). It catalyses the reaction sphing-4-enine-phosphocholine + H2O = sphing-4-enine + phosphocholine + H(+). It carries out the reaction 1-(9Z-octadecenoyl)-sn-glycero-3-phosphocholine + H2O = 1-(9Z-octadecenoyl)-sn-glycerol + phosphocholine + H(+). The catalysed reaction is 1-(9Z,12Z)-octadecadienoyl-sn-glycero-3-phosphocholine + H2O = 1-(9Z,12Z-octadecadienoyl)-sn-glycerol + phosphocholine + H(+). The enzyme catalyses glycero-2-phosphocholine + H2O = phosphocholine + glycerol + H(+). With respect to regulation, inhibited by EDTA and EGTA in vitro. Choline-specific glycerophosphodiesterase that hydrolyzes glycerophosphocholine (GPC) and lysophosphatidylcholine (LPC) and contributes to supplying choline to the cells. Has a preference for LPC with short (12:0 and 14:0) or polyunsaturated (18:2 and 20:4) fatty acids. In vitro, hydrolyzes only choline-containing lysophospholipids, such as sphingosylphosphorylcholine (SPC), platelet-activating factor (PAF) and lysoPAF, but not other lysophospholipids. The polypeptide is Glycerophosphocholine cholinephosphodiesterase ENPP6 (Pongo abelii (Sumatran orangutan)).